Reading from the N-terminus, the 296-residue chain is Bifunctional protein FolD (296 aa).

Residues 168–170 (GRS), serine 197, and threonine 238 contribute to the NADP(+) site.

The protein belongs to the tetrahydrofolate dehydrogenase/cyclohydrolase family. In terms of assembly, homodimer.

It carries out the reaction (6R)-5,10-methylene-5,6,7,8-tetrahydrofolate + NADP(+) = (6R)-5,10-methenyltetrahydrofolate + NADPH. The enzyme catalyses (6R)-5,10-methenyltetrahydrofolate + H2O = (6R)-10-formyltetrahydrofolate + H(+). It participates in one-carbon metabolism; tetrahydrofolate interconversion. In terms of biological role, catalyzes the oxidation of 5,10-methylenetetrahydrofolate to 5,10-methenyltetrahydrofolate and then the hydrolysis of 5,10-methenyltetrahydrofolate to 10-formyltetrahydrofolate. The chain is Bifunctional protein FolD from Porphyromonas gingivalis (strain ATCC BAA-308 / W83).